A 332-amino-acid polypeptide reads, in one-letter code: MTIAPEGRRLLRVEARNAAVPIEKKPPWIKTRATMGPEYTELRSLVRREGLHTVCEEAGCPNIFECWEDREATFLIGGDQCTRRCDFCQIDTGKPADFDADEPRRVAESVQAMGLRYSTVTGVARDDLADGGAWLYAETVRQIHALNPGTGVELLIPDFNAEPDQLAEVFSSRPEVLAHNLETVPRVFKRIRPGFRYARSLSVLTAARDAGLVTKSNLILGMGETTAEAVEALADLHAAGCDLVTITQYLRPSPRHHPVERWVKPEEFVELSDEAERIGFLGVMAGPLVRSSYRAGRLWGQAMARRGLEVPPALAHLTEPTTSRQEAASLLR.

Residues Cys-55, Cys-60, Cys-66, Cys-81, Cys-85, Cys-88, and Ser-292 each contribute to the [4Fe-4S] cluster site. Residues 67–281 form the Radical SAM core domain; that stretch reads WEDREATFLI…SDEAERIGFL (215 aa).

This sequence belongs to the radical SAM superfamily. Lipoyl synthase family. [4Fe-4S] cluster serves as cofactor.

The protein localises to the cytoplasm. The catalysed reaction is [[Fe-S] cluster scaffold protein carrying a second [4Fe-4S](2+) cluster] + N(6)-octanoyl-L-lysyl-[protein] + 2 oxidized [2Fe-2S]-[ferredoxin] + 2 S-adenosyl-L-methionine + 4 H(+) = [[Fe-S] cluster scaffold protein] + N(6)-[(R)-dihydrolipoyl]-L-lysyl-[protein] + 4 Fe(3+) + 2 hydrogen sulfide + 2 5'-deoxyadenosine + 2 L-methionine + 2 reduced [2Fe-2S]-[ferredoxin]. Its pathway is protein modification; protein lipoylation via endogenous pathway; protein N(6)-(lipoyl)lysine from octanoyl-[acyl-carrier-protein]: step 2/2. Its function is as follows. Catalyzes the radical-mediated insertion of two sulfur atoms into the C-6 and C-8 positions of the octanoyl moiety bound to the lipoyl domains of lipoate-dependent enzymes, thereby converting the octanoylated domains into lipoylated derivatives. In Beutenbergia cavernae (strain ATCC BAA-8 / DSM 12333 / CCUG 43141 / JCM 11478 / NBRC 16432 / NCIMB 13614 / HKI 0122), this protein is Lipoyl synthase.